The chain runs to 396 residues: Tryptophan synthase beta chain (396 aa).

The residue at position 86 (K86) is an N6-(pyridoxal phosphate)lysine.

Belongs to the TrpB family. Tetramer of two alpha and two beta chains. Requires pyridoxal 5'-phosphate as cofactor.

The catalysed reaction is (1S,2R)-1-C-(indol-3-yl)glycerol 3-phosphate + L-serine = D-glyceraldehyde 3-phosphate + L-tryptophan + H2O. Its pathway is amino-acid biosynthesis; L-tryptophan biosynthesis; L-tryptophan from chorismate: step 5/5. Its function is as follows. The beta subunit is responsible for the synthesis of L-tryptophan from indole and L-serine. This Aliivibrio fischeri (strain MJ11) (Vibrio fischeri) protein is Tryptophan synthase beta chain.